A 1676-amino-acid polypeptide reads, in one-letter code: DNA-directed RNA polymerase subunit beta'-beta'' (1676 aa).

The DNA-directed RNA polymerase subunit beta' stretch occupies residues 1–582; it reads MCDAIQIRLA…FLKTTPGRII (582 aa). The Zn(2+) site is built by C64, C66, C79, and C82. Residues D454, D456, and D458 each coordinate Mg(2+). The tract at residues 583 to 1676 is DNA-directed RNA polymerase subunit beta''; that stretch reads FYQQAAYHVG…IPAGTGAKYL (1094 aa). C804, C859, C866, and C869 together coordinate Zn(2+).

The protein in the N-terminal section; belongs to the RNA polymerase beta' chain family. RpoC1 subfamily. In the C-terminal section; belongs to the RNA polymerase beta' chain family. RpoC2 subfamily. In terms of assembly, in plastids the minimal PEP RNA polymerase catalytic core is composed of four subunits: alpha, beta, beta', and beta''. When a (nuclear-encoded) sigma factor is associated with the core the holoenzyme is formed, which can initiate transcription. Beta' and beta'' are fused in this algae. Requires Mg(2+) as cofactor. Zn(2+) serves as cofactor.

The protein localises to the plastid. The protein resides in the chloroplast. It catalyses the reaction RNA(n) + a ribonucleoside 5'-triphosphate = RNA(n+1) + diphosphate. Its function is as follows. DNA-dependent RNA polymerase catalyzes the transcription of DNA into RNA using the four ribonucleoside triphosphates as substrates. The chain is DNA-directed RNA polymerase subunit beta'-beta'' from Cyanidioschyzon merolae (strain NIES-3377 / 10D) (Unicellular red alga).